The chain runs to 389 residues: Apoptosis inhibitor U19 (389 aa).

This sequence belongs to the beta-herpesvirinae UL38 protein family. Interacts with host MDM2; this interaction leads to the stabilization of host TP53.

The protein resides in the host cytoplasm. The protein localises to the host nucleus. In terms of biological role, plays a role in the inhibition of host apoptosis to facilitate efficient viral replication. Promotes stabilization and inactivation of host TP53 through interaction with host MDM2. The polypeptide is Apoptosis inhibitor U19 (U19) (Homo sapiens (Human)).